Consider the following 167-residue polypeptide: 2-amino-4-hydroxy-6-hydroxymethyldihydropteridine pyrophosphokinase (167 aa).

The protein belongs to the HPPK family.

It catalyses the reaction 6-hydroxymethyl-7,8-dihydropterin + ATP = (7,8-dihydropterin-6-yl)methyl diphosphate + AMP + H(+). The protein operates within cofactor biosynthesis; tetrahydrofolate biosynthesis; 2-amino-4-hydroxy-6-hydroxymethyl-7,8-dihydropteridine diphosphate from 7,8-dihydroneopterin triphosphate: step 4/4. Functionally, catalyzes the transfer of pyrophosphate from adenosine triphosphate (ATP) to 6-hydroxymethyl-7,8-dihydropterin, an enzymatic step in folate biosynthesis pathway. In Bacillus subtilis (strain 168), this protein is 2-amino-4-hydroxy-6-hydroxymethyldihydropteridine pyrophosphokinase (folK).